Consider the following 532-residue polypeptide: uncharacterized protein (532 aa).

The next 6 helical transmembrane spans lie at His7–Ile26, Gly30–Ile52, Phe59–Phe77, Leu87–Phe109, Val116–Ile134, and Ser139–Val161. RCK C-terminal domains follow at residues Leu179–Glu262 and Arg263–Asn346. 4 helical membrane-spanning segments follow: residues Phe356–Gly378, Gly388–Met410, Gly446–Gly468, and Tyr509–Val531.

Belongs to the AAE transporter (TC 2.A.81) family.

Its subcellular location is the cell membrane. This is an uncharacterized protein from Bacteroides fragilis (strain YCH46).